We begin with the raw amino-acid sequence, 221 residues long: Octanoyltransferase (221 aa).

Residues 31-216 enclose the BPL/LPL catalytic domain; it reads GQIGDTLLLL…SLCAIFDLRP (186 aa). Residues 76 to 83, 145 to 147, and 159 to 161 contribute to the substrate site; these read RGGEVTYH, AIG, and GLA. Cys177 functions as the Acyl-thioester intermediate in the catalytic mechanism.

The protein belongs to the LipB family.

The protein localises to the cytoplasm. It catalyses the reaction octanoyl-[ACP] + L-lysyl-[protein] = N(6)-octanoyl-L-lysyl-[protein] + holo-[ACP] + H(+). It participates in protein modification; protein lipoylation via endogenous pathway; protein N(6)-(lipoyl)lysine from octanoyl-[acyl-carrier-protein]: step 1/2. Its function is as follows. Catalyzes the transfer of endogenously produced octanoic acid from octanoyl-acyl-carrier-protein onto the lipoyl domains of lipoate-dependent enzymes. Lipoyl-ACP can also act as a substrate although octanoyl-ACP is likely to be the physiological substrate. In Chloroflexus aggregans (strain MD-66 / DSM 9485), this protein is Octanoyltransferase.